A 209-amino-acid polypeptide reads, in one-letter code: GTP cyclohydrolase 1 (209 aa).

3 residues coordinate Zn(2+): Cys-89, His-92, and Cys-163.

This sequence belongs to the GTP cyclohydrolase I family. Toroid-shaped homodecamer, composed of two pentamers of five dimers.

The catalysed reaction is GTP + H2O = 7,8-dihydroneopterin 3'-triphosphate + formate + H(+). It participates in cofactor biosynthesis; 7,8-dihydroneopterin triphosphate biosynthesis; 7,8-dihydroneopterin triphosphate from GTP: step 1/1. The sequence is that of GTP cyclohydrolase 1 from Sulfolobus acidocaldarius (strain ATCC 33909 / DSM 639 / JCM 8929 / NBRC 15157 / NCIMB 11770).